A 166-amino-acid chain; its full sequence is uncharacterized protein (166 aa).

The next 3 helical transmembrane spans lie at 4–24 (LNIF…EASI), 101–121 (LITC…SEAI), and 146–166 (SWSS…QCFL).

Its subcellular location is the membrane. This is an uncharacterized protein from Saccharomyces cerevisiae (strain ATCC 204508 / S288c) (Baker's yeast).